A 695-amino-acid chain; its full sequence is U1 snRNP-associated protein usp107 (695 aa).

Over residues 85–96 the composition is skewed to basic and acidic residues; sequence RDNESQQKDRKN. The disordered stretch occupies residues 85 to 134; that stretch reads RDNESQQKDRKNLPRNQKSNEIQEKQTFQTPSSEKSTTERESRPFVPPNS. Positions 98–113 are enriched in polar residues; sequence PRNQKSNEIQEKQTFQ. An RRM domain is found at 139-221; sequence RMLFIGNIPK…PSTRLSLITD (83 aa). Residues 265–369 are a coiled coil; the sequence is DVRSRIERAA…NLLSKHRISR (105 aa). 2 stretches are compositionally biased toward basic and acidic residues: residues 487-506 and 548-561; these read EEDA…RTRG and SERR…RLLL. 2 disordered regions span residues 487–509 and 540–590; these read EEDA…GEGA and QTKK…AEKT. Residues 605–695 form the PWI domain; the sequence is ESLWALPIDW…HVLLILRSEA (91 aa).

As to quaternary structure, component of the U1 snRNP particle, a subcomplex of the spliceosome. Interacts with prp5 and usp102.

The protein localises to the cytoplasm. Its subcellular location is the nucleus. Functionally, component of the U1 snRNP particle, which recognizes and binds the 5'-splice site of pre-mRNA. Together with other non-snRNP factors, U1 snRNP forms the spliceosomal commitment complex, that targets pre-mRNA to the splicing pathway. This Schizosaccharomyces pombe (strain 972 / ATCC 24843) (Fission yeast) protein is U1 snRNP-associated protein usp107 (usp107).